A 446-amino-acid polypeptide reads, in one-letter code: MVTPLHNSRPRRVAVLSVHTSPLAQPGTGDAGGMNVYVLQSAIQMARRGVEVEIFTRATSSADAPVQEAAPGVLVRNVVAGPFEGLDKQDLPTQLCAFVAGVLREEARHEPGYYNLVHSHYWLSGQVGWLARDRWGVPLVHTAHTLAAVKNLSLAEGDTPEPAARQIGEQQVVAESDRLVANTTEESDQLVRHYGADPNRIDVVAPGADLTRYRPGDRDAARATLGLDPRETVVTFVGRIQPLKAPDVLLRAAAELIARDPASSLRVLVVGGPSGSGLARPDALIELASSLGIAARVTFLPPQAPDRLADVYRASDLVAVPSYSESFGLVAIEAQACGTPVIAANVGGLGVAVRSGETGLLVDGHRTEDWATALQSLVSEPARLAALAAEAPRHAENFSWEHTADGLLESYRMATVNYNYGHGPSEFSPRRGRGLWKLRRAGGVRA.

His-19 provides a ligand contact to 1D-myo-inositol 3-phosphate. Residues 25-26 (QP) and Gly-33 contribute to the UDP-N-acetyl-alpha-D-glucosamine site. Residues 30–35 (DAGGMN), Lys-88, Tyr-121, Thr-145, and Arg-165 contribute to the 1D-myo-inositol 3-phosphate site. Residues Arg-239, Lys-244, and Gln-303 each contribute to the UDP-N-acetyl-alpha-D-glucosamine site. Mg(2+) is bound by residues Tyr-312, Arg-313, and Ser-315. Glu-325 and Glu-333 together coordinate UDP-N-acetyl-alpha-D-glucosamine. Thr-339 contributes to the Mg(2+) binding site.

This sequence belongs to the glycosyltransferase group 1 family. MshA subfamily. In terms of assembly, homodimer.

It catalyses the reaction 1D-myo-inositol 3-phosphate + UDP-N-acetyl-alpha-D-glucosamine = 1D-myo-inositol 2-acetamido-2-deoxy-alpha-D-glucopyranoside 3-phosphate + UDP + H(+). Catalyzes the transfer of a N-acetyl-glucosamine moiety to 1D-myo-inositol 3-phosphate to produce 1D-myo-inositol 2-acetamido-2-deoxy-glucopyranoside 3-phosphate in the mycothiol biosynthesis pathway. In Rhodococcus opacus (strain B4), this protein is D-inositol 3-phosphate glycosyltransferase.